The chain runs to 490 residues: Katanin p60 ATPase-containing subunit A-like 1 (490 aa).

Position 1 is an N-acetylmethionine (Met-1). The interval Asp-95–Ala-184 is disordered. The span at Pro-116 to Met-127 shows a compositional bias: basic and acidic residues. Positions Ala-128–Ala-139 are enriched in low complexity. Residues Ser-143–Met-169 show a composition bias toward basic and acidic residues. Ser-174 is subject to Phosphoserine. Gly-248–Thr-255 provides a ligand contact to ATP.

It belongs to the AAA ATPase family. Katanin p60 subunit A1 subfamily. A-like 1 sub-subfamily. Interacts with KATNB1 and KATNBL1. In terms of tissue distribution, expressed in testis, restricted to Sertoli cells (at protein level).

The protein localises to the cytoplasm. The protein resides in the cytoskeleton. It localises to the spindle pole. It is found in the spindle. The catalysed reaction is n ATP + n H2O + a microtubule = n ADP + n phosphate + (n+1) alpha/beta tubulin heterodimers.. Regulates microtubule dynamics in Sertoli cells, a process that is essential for spermiogenesis and male fertility. Severs microtubules in an ATP-dependent manner, promoting rapid reorganization of cellular microtubule arrays. Has microtubule-severing activity in vitro. The protein is Katanin p60 ATPase-containing subunit A-like 1 of Homo sapiens (Human).